The following is a 346-amino-acid chain: MKFLDSAKIYIRSGDGGAGCLSFRREKFIEFGGPDGGDGGRGGDVVVECVGGLNTLIDYRYQQHFKAKTGVHGMGKNRAGGRGADAVLKVPVGTQILDEDGETMIADMTEAGQRLVLARGGNGGFGNAHFKSATNQAPRRVNPGQEGVERTVLLRLKLIADAGLVGLPNAGKSTFLATVSAARPKIADYPFTTLNPQLGVVGCDGREFVLADIPGLIEGAHEGIGLGDRFLGHVERCRVLLHLVGADTEHAGKAYKTVRRELEAYGGGLADKPEIVALSKVDSVDPDTLKQQAMRLKRAAKRAPLQLSAATNLNVQKALRAVLAEIDAAAVADAAGTAADAVVWAP.

Residues 1 to 159 (MKFLDSAKIY…RTVLLRLKLI (159 aa)) enclose the Obg domain. In terms of domain architecture, OBG-type G spans 160 to 327 (ADAGLVGLPN…ALRAVLAEID (168 aa)). GTP is bound by residues 166 to 173 (GLPNAGKS), 191 to 195 (FTTLN), 212 to 215 (DIPG), 279 to 282 (SKVD), and 308 to 310 (SAA). Mg(2+) contacts are provided by serine 173 and threonine 193.

This sequence belongs to the TRAFAC class OBG-HflX-like GTPase superfamily. OBG GTPase family. Monomer. The cofactor is Mg(2+).

It is found in the cytoplasm. Its function is as follows. An essential GTPase which binds GTP, GDP and possibly (p)ppGpp with moderate affinity, with high nucleotide exchange rates and a fairly low GTP hydrolysis rate. Plays a role in control of the cell cycle, stress response, ribosome biogenesis and in those bacteria that undergo differentiation, in morphogenesis control. The sequence is that of GTPase Obg from Methylocella silvestris (strain DSM 15510 / CIP 108128 / LMG 27833 / NCIMB 13906 / BL2).